A 95-amino-acid polypeptide reads, in one-letter code: Aspartyl/glutamyl-tRNA(Asn/Gln) amidotransferase subunit C (95 aa).

The protein belongs to the GatC family. Heterotrimer of A, B and C subunits.

The enzyme catalyses L-glutamyl-tRNA(Gln) + L-glutamine + ATP + H2O = L-glutaminyl-tRNA(Gln) + L-glutamate + ADP + phosphate + H(+). The catalysed reaction is L-aspartyl-tRNA(Asn) + L-glutamine + ATP + H2O = L-asparaginyl-tRNA(Asn) + L-glutamate + ADP + phosphate + 2 H(+). Allows the formation of correctly charged Asn-tRNA(Asn) or Gln-tRNA(Gln) through the transamidation of misacylated Asp-tRNA(Asn) or Glu-tRNA(Gln) in organisms which lack either or both of asparaginyl-tRNA or glutaminyl-tRNA synthetases. The reaction takes place in the presence of glutamine and ATP through an activated phospho-Asp-tRNA(Asn) or phospho-Glu-tRNA(Gln). In Rhizobium rhizogenes (strain K84 / ATCC BAA-868) (Agrobacterium radiobacter), this protein is Aspartyl/glutamyl-tRNA(Asn/Gln) amidotransferase subunit C.